Consider the following 89-residue polypeptide: Small ribosomal subunit protein uS15 (89 aa).

Belongs to the universal ribosomal protein uS15 family. In terms of assembly, part of the 30S ribosomal subunit. Forms a bridge to the 50S subunit in the 70S ribosome, contacting the 23S rRNA.

Its function is as follows. One of the primary rRNA binding proteins, it binds directly to 16S rRNA where it helps nucleate assembly of the platform of the 30S subunit by binding and bridging several RNA helices of the 16S rRNA. Forms an intersubunit bridge (bridge B4) with the 23S rRNA of the 50S subunit in the ribosome. This is Small ribosomal subunit protein uS15 from Geobacillus thermodenitrificans (strain NG80-2).